The sequence spans 239 residues: Serine protease SplF (239 aa).

Positions 1 to 36 (MNKNIIIKSIAALTILTSITGVGTTVVDGIQQTAKA) are cleaved as a signal peptide. Residues histidine 75, aspartate 114, and serine 192 each act as charge relay system in the active site.

The protein belongs to the peptidase S1B family.

It localises to the secreted. The sequence is that of Serine protease SplF (splF) from Staphylococcus aureus (strain MSSA476).